The sequence spans 164 residues: UPF0114 protein YqhA (164 aa).

3 helical membrane-spanning segments follow: residues 10–32 (YASRWLLAPVYFGLSLALVALAL), 53–75 (LILVLLSLVDMTLVGGLLVMVMF), and 136–155 (LMWYVIIHLTFVLSAFVMGY).

Belongs to the UPF0114 family.

It localises to the cell membrane. The protein is UPF0114 protein YqhA of Shigella flexneri.